We begin with the raw amino-acid sequence, 245 residues long: UDP-2,3-diacylglucosamine hydrolase (245 aa).

The Mn(2+) site is built by aspartate 8, histidine 10, aspartate 41, asparagine 79, and histidine 114. 79–80 (NR) contributes to the substrate binding site. Positions 122, 160, 164, 167, and 195 each coordinate substrate. 2 residues coordinate Mn(2+): histidine 195 and histidine 197.

This sequence belongs to the LpxH family. It depends on Mn(2+) as a cofactor.

The protein localises to the cell inner membrane. The enzyme catalyses UDP-2-N,3-O-bis[(3R)-3-hydroxytetradecanoyl]-alpha-D-glucosamine + H2O = 2-N,3-O-bis[(3R)-3-hydroxytetradecanoyl]-alpha-D-glucosaminyl 1-phosphate + UMP + 2 H(+). It participates in glycolipid biosynthesis; lipid IV(A) biosynthesis; lipid IV(A) from (3R)-3-hydroxytetradecanoyl-[acyl-carrier-protein] and UDP-N-acetyl-alpha-D-glucosamine: step 4/6. In terms of biological role, hydrolyzes the pyrophosphate bond of UDP-2,3-diacylglucosamine to yield 2,3-diacylglucosamine 1-phosphate (lipid X) and UMP by catalyzing the attack of water at the alpha-P atom. Involved in the biosynthesis of lipid A, a phosphorylated glycolipid that anchors the lipopolysaccharide to the outer membrane of the cell. This chain is UDP-2,3-diacylglucosamine hydrolase, found in Photobacterium profundum (strain SS9).